A 68-amino-acid polypeptide reads, in one-letter code: Small cysteine-rich protein 5 (68 aa).

Positions 1-24 (MAVKFHLCLLLIILVGMGAHVAFA) are cleaved as a signal peptide.

This sequence belongs to the Cnidaria small cysteine-rich protein (SCRiP) family. gamma subfamily. Post-translationally, contains 4 disulfide bonds.

Its subcellular location is the secreted. It localises to the nematocyst. Functionally, induces neurotoxic symptoms on zebrafish. Has also been claimed to be implied in calcification, but tests on homolog proteins suggest that proteins of this family have a neurotoxic function and not a calcification function. The protein is Small cysteine-rich protein 5 of Orbicella faveolata (Mountainous star coral).